The chain runs to 901 residues: ABC transporter A family member 8 (901 aa).

7 helical membrane-spanning segments follow: residues leucine 34–threonine 54, isoleucine 315–isoleucine 335, phenylalanine 369–leucine 389, valine 402–phenylalanine 422, threonine 427–phenylalanine 447, tryptophan 460–tyrosine 477, and cysteine 508–isoleucine 528. Residues valine 586 to threonine 823 form the ABC transporter domain. ATP is bound at residue glycine 624–threonine 631.

This sequence belongs to the ABC transporter superfamily. ABCA family. CPR flippase (TC 3.A.1.211) subfamily.

The protein localises to the membrane. The chain is ABC transporter A family member 8 (ABCA8) from Arabidopsis thaliana (Mouse-ear cress).